A 357-amino-acid polypeptide reads, in one-letter code: Prostaglandin D2 receptor (357 aa).

At 1 to 20 the chain is on the extracellular side; that stretch reads MNESYRCQTSTWVERGSSAT. N2 is a glycosylation site (N-linked (GlcNAc...) asparagine). A helical transmembrane segment spans residues 21–41; it reads MGAVLFGAGLLGNLLALVLLA. Over 42–58 the chain is Cytoplasmic; the sequence is RSGLGSCRPGPLHPPPS. Residues 59–79 traverse the membrane as a helical segment; it reads VFYVLVCGLTVTDLLGKCLIS. The Extracellular portion of the chain corresponds to 80-106; sequence PMVLAAYAQNQSLKELLPASGNQLCET. Residue N89 is glycosylated (N-linked (GlcNAc...) asparagine). C104 and C182 are oxidised to a cystine. Residues 107–127 form a helical membrane-spanning segment; that stretch reads FAFLMSFFGLASTLQLLAMAV. Residues 128-149 lie on the Cytoplasmic side of the membrane; sequence ECWLSLGHPFFYQRHVTLRRGV. A helical membrane pass occupies residues 150 to 170; that stretch reads LVAPVVAAFCLAFCALPFAGF. Residues 171 to 194 lie on the Extracellular side of the membrane; it reads GKFVQYCPGTWCFIQMIHKERSFS. Residues 195-215 form a helical membrane-spanning segment; that stretch reads VIGFSVLYSSLMALLVLATVV. Residues 216 to 261 are Cytoplasmic-facing; it reads CNLGAMYNLYDMHRRQRHYPHRCSRDRAQSGSDYRHGSLHPLEELD. The helical transmembrane segment at 262-282 threads the bilayer; the sequence is HFVLLALMTVLFTMCSLPLIY. At 283–306 the chain is on the extracellular side; it reads RAYYGAFKLENKAEGDSEDLQALR. Residues 307 to 327 traverse the membrane as a helical segment; sequence FLSVISIVDPWIFIIFRTSVF. Topologically, residues 328–357 are cytoplasmic; sequence RMLFHKVFTRPLIYRNWSSHSQQSNVESTL.

It belongs to the G-protein coupled receptor 1 family. In terms of tissue distribution, most abundantly expressed in the ileum, followed by lung, stomach and uterus.

The protein resides in the cell membrane. In terms of biological role, receptor for prostaglandin D2 (PGD2). The activity of this receptor is mainly mediated by G(s) proteins that stimulate adenylate cyclase, resulting in an elevation of intracellular cAMP. A mobilization of calcium is also observed, but without formation of inositol 1,4,5-trisphosphate. Involved in PLA2G3-dependent maturation of mast cells. PLA2G3 is secreted by immature mast cells and acts on nearby fibroblasts upstream to PTDGS to synthesize PGD2, which in turn promotes mast cell maturation and degranulation via PTGDR. This is Prostaglandin D2 receptor (Ptgdr) from Mus musculus (Mouse).